The sequence spans 513 residues: Flagellin A (513 aa).

This sequence belongs to the bacterial flagellin family. As to quaternary structure, heteromer of FlaA and FlaB. FlaB is located proximal to the hook while the remainder of the filament is composed of the predominant FlaA.

It is found in the secreted. The protein resides in the bacterial flagellum. Its function is as follows. Flagellin is the subunit protein which polymerizes to form the filaments of bacterial flagella. Important for motility and virulence. This chain is Flagellin A (flaA), found in Helicobacter felis (strain ATCC 49179 / CCUG 28539 / NCTC 12436 / CS1).